Here is a 139-residue protein sequence, read N- to C-terminus: Small ribosomal subunit protein uS12m (139 aa).

The tract at residues 1 to 21 is disordered; the sequence is MLSTLYQNDLKKKRNRRRNRS. Over residues 11 to 20 the composition is skewed to basic residues; the sequence is KKKRNRRRNR.

This sequence belongs to the universal ribosomal protein uS12 family.

The protein localises to the mitochondrion. Protein S12 is involved in the translation initiation step. The sequence is that of Small ribosomal subunit protein uS12m (RPS12) from Paramecium tetraurelia.